A 418-amino-acid polypeptide reads, in one-letter code: MRAERMSPLLALGLLVSGLCSRVHCLPENVTPEERHKGTSVDGHSLASSNTDFAFSLYKQLALKNPNKNVIFSPLSISIALAFLSLGARGPTVTEILEGLKFNLTETLEREIHQGFQHLLQMLSRPSNELQLSVGNTMFVQEQLKLLDKFREDALALYTSEAFSTNFKDPETAKSLINDYVKNKTRGKIVDLFKDLDPLTKVILVNYIYFKAQWRTPFDPKQTYKSQFHVSKNKTVEVPMMSIGDLVTPYFRDEELDCTLVELTYTSNDSALFILPDEGKMQDLEAKLIPEMLTRWRESLYPRGIHELNLPRFSIATDYKLKDILSQLEIKKVFTQEADLSGITDDHELEVSQVVHKAVLDVGEEGTEGAAATGVKVGITSINNHIPLSFNRPFLIAIVLKDTQSIIFLGKVTNPSQA.

The first 25 residues, 1 to 25 (MRAERMSPLLALGLLVSGLCSRVHC), serve as a signal peptide directing secretion. N-linked (GlcNAc...) asparagine glycans are attached at residues Asn-103, Asn-183, Asn-233, and Asn-268.

The protein belongs to the serpin family. Homodimer.

It is found in the cytoplasmic vesicle. Its subcellular location is the secretory vesicle. The protein localises to the chromaffin granule. It localises to the secreted. Its function is as follows. Serine protease inhibitor. The protein is Serpin A3-8 of Bos taurus (Bovine).